Reading from the N-terminus, the 157-residue chain is Endoribonuclease YbeY (157 aa).

Zn(2+)-binding residues include H111, H115, and H121.

This sequence belongs to the endoribonuclease YbeY family. Zn(2+) serves as cofactor.

The protein localises to the cytoplasm. Its function is as follows. Single strand-specific metallo-endoribonuclease involved in late-stage 70S ribosome quality control and in maturation of the 3' terminus of the 16S rRNA. This is Endoribonuclease YbeY from Pseudomonas entomophila (strain L48).